Here is a 117-residue protein sequence, read N- to C-terminus: Large ribosomal subunit protein bL20 (117 aa).

This sequence belongs to the bacterial ribosomal protein bL20 family.

Functionally, binds directly to 23S ribosomal RNA and is necessary for the in vitro assembly process of the 50S ribosomal subunit. It is not involved in the protein synthesizing functions of that subunit. This is Large ribosomal subunit protein bL20 from Campylobacter jejuni subsp. jejuni serotype O:6 (strain 81116 / NCTC 11828).